The chain runs to 143 residues: MSHDADDKTYPYRKDDAELRRRLTPLQYEVTQHAATERAFTGEYTDKEDDGIYKCVVCDTPLFESGAKFHSGCGWPSYFKPLNGEVIDEKIDYSHGMVRVEVRCNHCGAHLGHVFEDGPRDKTGLRYCINSAALNFESRPEND.

One can recognise a MsrB domain in the interval 16-139 (DAELRRRLTP…NSAALNFESR (124 aa)). Zn(2+)-binding residues include C55, C58, C104, and C107. The active-site Nucleophile is the C128.

It belongs to the MsrB Met sulfoxide reductase family. Zn(2+) serves as cofactor.

The enzyme catalyses L-methionyl-[protein] + [thioredoxin]-disulfide + H2O = L-methionyl-(R)-S-oxide-[protein] + [thioredoxin]-dithiol. The protein is Peptide methionine sulfoxide reductase MsrB of Burkholderia multivorans (strain ATCC 17616 / 249).